A 238-amino-acid polypeptide reads, in one-letter code: Glutamine amidotransferase-like protein chyE (238 aa).

The Glutamine amidotransferase type-1 domain occupies 8–238 (KIAVLINTPP…LERVLQWLSE (231 aa)). C102 serves as the catalytic Nucleophile. Active-site residues include H189 and E191.

This sequence belongs to the peptidase C26 family.

It participates in pigment biosynthesis. In terms of biological role, glutamine amidotransferase-like protein; part of the gene cluster that mediates the biosynthesis of the yellow pigment chrysogine. the NRPS chyA mediates the condensation of anthranilic acid and alanine into the intermediate 2-(2-aminopropanamido)benzoic acid. The remainder of the pathway is highly branched yielding at least 13 chrysogine-related compounds. The malonyl transferase chyE converts 2-(2-aminopropanamido)benzoic acid and 2-(2-aminopropanamido)benzamidine into 2-(2-(2-carboxyacetamido)propanamido)benzoic acid and 3-((1-((2-carbamoylphenyl)amino)-1-oxopropan-2-yl)amino)-3-oxopropanoic acid, respectively. ChyD is an amidase, being responsible for the amidation of the carboxylic acid moiety of 2-(2-aminopropanamido)benzoic acid, 2-(2-(2-carboxyacetamido)propanamido)benzoic acid and 2-(2-((4-amino-1-carboxy-4-oxobutyl)amino)propanamido)benzoic acid. ChyC is involved in the same reactions as ChyD, but plays a more minor role in the amidation reactions compared to chyD. The oxidoreductases chyH and chyM are involved in oxidation reactions that form N-pyruvoylanthranilamide from 2-(2-aminopropanamido)benzamidine and (1-((2-carbamoylphenyl)amino)-1-oxopropan-2-yl)glutamine, respectively. N-pyruvoylanthranilamide is further converted via two further branches in the pathway, yielding chrysogine and additional chrysogine-related coumpounds. Chrysogine is likely formed by a spontaneous ring closure from N-pyruvoylanthranilamide. The protein is Glutamine amidotransferase-like protein chyE of Penicillium rubens (strain ATCC 28089 / DSM 1075 / NRRL 1951 / Wisconsin 54-1255) (Penicillium chrysogenum).